A 156-amino-acid chain; its full sequence is Putative pre-16S rRNA nuclease (156 aa).

It belongs to the YqgF nuclease family.

It localises to the cytoplasm. Functionally, could be a nuclease involved in processing of the 5'-end of pre-16S rRNA. The sequence is that of Putative pre-16S rRNA nuclease from Ehrlichia chaffeensis (strain ATCC CRL-10679 / Arkansas).